A 384-amino-acid polypeptide reads, in one-letter code: Spermidine/putrescine import ATP-binding protein PotA (384 aa).

In terms of domain architecture, ABC transporter spans 6-238; sequence IAFQNVSKVF…PINHFVATFI (233 aa). 40–47 lines the ATP pocket; it reads GASGSGKS.

Belongs to the ABC transporter superfamily. Spermidine/putrescine importer (TC 3.A.1.11.1) family. The complex is composed of two ATP-binding proteins (PotA), two transmembrane proteins (PotB and PotC) and a solute-binding protein (PotD).

The protein localises to the cell membrane. It carries out the reaction ATP + H2O + polyamine-[polyamine-binding protein]Side 1 = ADP + phosphate + polyamineSide 2 + [polyamine-binding protein]Side 1.. Its function is as follows. Part of the ABC transporter complex PotABCD involved in spermidine/putrescine import. Responsible for energy coupling to the transport system. In Streptococcus thermophilus (strain ATCC BAA-491 / LMD-9), this protein is Spermidine/putrescine import ATP-binding protein PotA.